A 282-amino-acid chain; its full sequence is NADPH-dependent 7-cyano-7-deazaguanine reductase (282 aa).

Ile88–Ser90 contributes to the substrate binding site. Ser90–Lys91 is a binding site for NADPH. Residue Cys190 is the Thioimide intermediate of the active site. The active-site Proton donor is Asp197. Residue His229–Glu230 coordinates substrate. Residue Arg258 to Gly259 coordinates NADPH.

Belongs to the GTP cyclohydrolase I family. QueF type 2 subfamily. Homodimer.

It localises to the cytoplasm. The enzyme catalyses 7-aminomethyl-7-carbaguanine + 2 NADP(+) = 7-cyano-7-deazaguanine + 2 NADPH + 3 H(+). The protein operates within tRNA modification; tRNA-queuosine biosynthesis. Catalyzes the NADPH-dependent reduction of 7-cyano-7-deazaguanine (preQ0) to 7-aminomethyl-7-deazaguanine (preQ1). The polypeptide is NADPH-dependent 7-cyano-7-deazaguanine reductase (Escherichia coli (strain UTI89 / UPEC)).